Consider the following 413-residue polypeptide: Serine hydroxymethyltransferase (413 aa).

(6S)-5,6,7,8-tetrahydrofolate-binding positions include Leu117 and 121–123; that span reads GHL. Lys226 bears the N6-(pyridoxal phosphate)lysine mark. (6S)-5,6,7,8-tetrahydrofolate is bound by residues Glu239 and 349–351; that span reads SPF.

This sequence belongs to the SHMT family. In terms of assembly, homodimer. The cofactor is pyridoxal 5'-phosphate.

The protein resides in the cytoplasm. It carries out the reaction (6R)-5,10-methylene-5,6,7,8-tetrahydrofolate + glycine + H2O = (6S)-5,6,7,8-tetrahydrofolate + L-serine. Its pathway is one-carbon metabolism; tetrahydrofolate interconversion. It functions in the pathway amino-acid biosynthesis; glycine biosynthesis; glycine from L-serine: step 1/1. Catalyzes the reversible interconversion of serine and glycine with tetrahydrofolate (THF) serving as the one-carbon carrier. This reaction serves as the major source of one-carbon groups required for the biosynthesis of purines, thymidylate, methionine, and other important biomolecules. Also exhibits THF-independent aldolase activity toward beta-hydroxyamino acids, producing glycine and aldehydes, via a retro-aldol mechanism. This chain is Serine hydroxymethyltransferase, found in Bacillus mycoides (strain KBAB4) (Bacillus weihenstephanensis).